The chain runs to 197 residues: Phosphoheptose isomerase (197 aa).

The SIS domain occupies 36 to 197; it reads MVNALLNEGK…IDSQLFGSEE (162 aa). 51–53 serves as a coordination point for substrate; it reads NGG. H60 and E64 together coordinate Zn(2+). Residues E64, 93-94, 119-121, S124, and Q174 each bind substrate; these read ND and STS. Zn(2+) contacts are provided by Q174 and H182.

It belongs to the SIS family. GmhA subfamily. In terms of assembly, homotetramer. Zn(2+) serves as cofactor.

It localises to the cytoplasm. The enzyme catalyses 2 D-sedoheptulose 7-phosphate = D-glycero-alpha-D-manno-heptose 7-phosphate + D-glycero-beta-D-manno-heptose 7-phosphate. Its pathway is carbohydrate biosynthesis; D-glycero-D-manno-heptose 7-phosphate biosynthesis; D-glycero-alpha-D-manno-heptose 7-phosphate and D-glycero-beta-D-manno-heptose 7-phosphate from sedoheptulose 7-phosphate: step 1/1. Catalyzes the isomerization of sedoheptulose 7-phosphate in D-glycero-D-manno-heptose 7-phosphate. The chain is Phosphoheptose isomerase from Pseudomonas fluorescens (strain SBW25).